Reading from the N-terminus, the 578-residue chain is Isocitrate dehydrogenase kinase/phosphatase (578 aa).

ATP is bound by residues 315-321 (APGIRGM) and K336. D371 is a catalytic residue.

This sequence belongs to the AceK family.

The protein localises to the cytoplasm. The catalysed reaction is L-seryl-[isocitrate dehydrogenase] + ATP = O-phospho-L-seryl-[isocitrate dehydrogenase] + ADP + H(+). Bifunctional enzyme which can phosphorylate or dephosphorylate isocitrate dehydrogenase (IDH) on a specific serine residue. This is a regulatory mechanism which enables bacteria to bypass the Krebs cycle via the glyoxylate shunt in response to the source of carbon. When bacteria are grown on glucose, IDH is fully active and unphosphorylated, but when grown on acetate or ethanol, the activity of IDH declines drastically concomitant with its phosphorylation. This chain is Isocitrate dehydrogenase kinase/phosphatase, found in Shigella boydii serotype 18 (strain CDC 3083-94 / BS512).